The primary structure comprises 302 residues: Sulfate adenylyltransferase subunit 2 (302 aa).

The protein belongs to the PAPS reductase family. CysD subfamily. In terms of assembly, heterodimer composed of CysD, the smaller subunit, and CysN.

The enzyme catalyses sulfate + ATP + H(+) = adenosine 5'-phosphosulfate + diphosphate. The protein operates within sulfur metabolism; hydrogen sulfide biosynthesis; sulfite from sulfate: step 1/3. In terms of biological role, with CysN forms the ATP sulfurylase (ATPS) that catalyzes the adenylation of sulfate producing adenosine 5'-phosphosulfate (APS) and diphosphate, the first enzymatic step in sulfur assimilation pathway. APS synthesis involves the formation of a high-energy phosphoric-sulfuric acid anhydride bond driven by GTP hydrolysis by CysN coupled to ATP hydrolysis by CysD. The protein is Sulfate adenylyltransferase subunit 2 of Erwinia tasmaniensis (strain DSM 17950 / CFBP 7177 / CIP 109463 / NCPPB 4357 / Et1/99).